We begin with the raw amino-acid sequence, 407 residues long: Protease ElaD (407 aa).

Residue His-231 is part of the active site. Cys-317 functions as the Nucleophile in the catalytic mechanism.

The protein belongs to the peptidase C79 family.

Protease that can act as an efficient and specific deubiquitinating enzyme in vitro. Does not possess desumoylating and deneddylating activities. The physiological substrate is unknown. This chain is Protease ElaD (elaD), found in Escherichia coli O157:H7.